Consider the following 215-residue polypeptide: Phosphatidylserine decarboxylase proenzyme (215 aa).

Ser185 acts as the Schiff-base intermediate with substrate; via pyruvic acid in catalysis. Ser185 is subject to Pyruvic acid (Ser); by autocatalysis.

It belongs to the phosphatidylserine decarboxylase family. PSD-A subfamily. As to quaternary structure, heterodimer of a large membrane-associated beta subunit and a small pyruvoyl-containing alpha subunit. Pyruvate is required as a cofactor. Post-translationally, is synthesized initially as an inactive proenzyme. Formation of the active enzyme involves a self-maturation process in which the active site pyruvoyl group is generated from an internal serine residue via an autocatalytic post-translational modification. Two non-identical subunits are generated from the proenzyme in this reaction, and the pyruvate is formed at the N-terminus of the alpha chain, which is derived from the carboxyl end of the proenzyme. The post-translation cleavage follows an unusual pathway, termed non-hydrolytic serinolysis, in which the side chain hydroxyl group of the serine supplies its oxygen atom to form the C-terminus of the beta chain, while the remainder of the serine residue undergoes an oxidative deamination to produce ammonia and the pyruvoyl prosthetic group on the alpha chain.

It localises to the cell membrane. The catalysed reaction is a 1,2-diacyl-sn-glycero-3-phospho-L-serine + H(+) = a 1,2-diacyl-sn-glycero-3-phosphoethanolamine + CO2. It participates in phospholipid metabolism; phosphatidylethanolamine biosynthesis; phosphatidylethanolamine from CDP-diacylglycerol: step 2/2. Functionally, catalyzes the formation of phosphatidylethanolamine (PtdEtn) from phosphatidylserine (PtdSer). The polypeptide is Phosphatidylserine decarboxylase proenzyme (Streptomyces griseus subsp. griseus (strain JCM 4626 / CBS 651.72 / NBRC 13350 / KCC S-0626 / ISP 5235)).